An 868-amino-acid polypeptide reads, in one-letter code: LPS-assembly protein LptD (868 aa).

An N-terminal signal peptide occupies residues methionine 1–alanine 24.

The protein belongs to the LptD family. In terms of assembly, component of the lipopolysaccharide transport and assembly complex. Interacts with LptE and LptA.

It is found in the cell outer membrane. Functionally, together with LptE, is involved in the assembly of lipopolysaccharide (LPS) at the surface of the outer membrane. The chain is LPS-assembly protein LptD from Francisella tularensis subsp. novicida (strain U112).